The primary structure comprises 322 residues: NADH-quinone oxidoreductase subunit H (322 aa).

8 helical membrane passes run 12–32, 79–99, 111–131, 151–171, 183–203, 234–254, 262–282, and 301–321; these read IGKA…MSFI, IFVL…AVVP, VGLL…LFAG, LSYE…TGSF, LWNV…GVAV, FFVG…TLFF, LPPF…FILL, and VCLP…LMNA.

This sequence belongs to the complex I subunit 1 family. In terms of assembly, NDH-1 is composed of 14 different subunits. Subunits NuoA, H, J, K, L, M, N constitute the membrane sector of the complex.

Its subcellular location is the cell inner membrane. The catalysed reaction is a quinone + NADH + 5 H(+)(in) = a quinol + NAD(+) + 4 H(+)(out). Its function is as follows. NDH-1 shuttles electrons from NADH, via FMN and iron-sulfur (Fe-S) centers, to quinones in the respiratory chain. The immediate electron acceptor for the enzyme in this species is believed to be ubiquinone. Couples the redox reaction to proton translocation (for every two electrons transferred, four hydrogen ions are translocated across the cytoplasmic membrane), and thus conserves the redox energy in a proton gradient. This subunit may bind ubiquinone. The protein is NADH-quinone oxidoreductase subunit H of Aeromonas hydrophila subsp. hydrophila (strain ATCC 7966 / DSM 30187 / BCRC 13018 / CCUG 14551 / JCM 1027 / KCTC 2358 / NCIMB 9240 / NCTC 8049).